Here is a 391-residue protein sequence, read N- to C-terminus: Saxitoxin and tetrodotoxin-binding protein 1 (391 aa).

The first 20 residues, 1–20 (MGAVPGVVLLLMLAVLGIRA), serve as a signal peptide directing secretion. Repeat copies occupy residues 24–202 (PEEC…HKKS) and 203–391 (PEEC…PEQD). N-linked (GlcNAc...) asparagine glycosylation is found at asparagine 54, asparagine 63, asparagine 97, asparagine 234, asparagine 268, asparagine 277, and asparagine 307.

In terms of assembly, homodimer or heterodimer of PSTBP1 and PSTBP2. Post-translationally, glycosylated.

The protein localises to the secreted. In terms of biological role, binds both saxitoxin and tetradotoxin. May play a role in toxin accumulation and/or excretion. This Takifugu pardalis (Panther puffer) protein is Saxitoxin and tetrodotoxin-binding protein 1 (psbp1).